The following is a 61-amino-acid chain: Small venom protein 1 (61 aa).

Positions 1–20 (MRCVAIFLVVICAFVLQALA) are cleaved as a signal peptide.

Expressed by the venom gland.

It localises to the secreted. This Pimpla hypochondriaca (Parasitoid wasp) protein is Small venom protein 1.